Consider the following 298-residue polypeptide: Interferon-inducible double-stranded RNA-dependent protein kinase activator A homolog B (298 aa).

3 consecutive DRBM domains span residues Thr20–Gly87, Asn112–Thr180, and Asp225–Ile293.

The protein belongs to the PRKRA family. Homodimer. Interacts with dicer1 and eif2ak2/pkr. Also able to interact with dsRNA. Associates with ribosomes. Expressed in brain, heart, kidney, liver, nerve and spleen.

It localises to the cytoplasm. It is found in the perinuclear region. The protein localises to the nucleus. The protein resides in the nucleolus. Activates eif2ak2/pkr in the absence of double-stranded RNA (dsRNA), leading to phosphorylation of eif2s1/efi2-alpha and inhibition of translation and induction of apoptosis. Required for siRNA production by dicer1 and for subsequent siRNA-mediated post-transcriptional gene silencing. Does not seem to be required for processing of pre-miRNA to miRNA by dicer1. This chain is Interferon-inducible double-stranded RNA-dependent protein kinase activator A homolog B (prkra-b), found in Xenopus laevis (African clawed frog).